The following is a 245-amino-acid chain: tRNA pseudouridine synthase A (245 aa).

Aspartate 52 serves as the catalytic Nucleophile. Substrate is bound at residue tyrosine 111.

It belongs to the tRNA pseudouridine synthase TruA family. Homodimer.

It catalyses the reaction uridine(38/39/40) in tRNA = pseudouridine(38/39/40) in tRNA. In terms of biological role, formation of pseudouridine at positions 38, 39 and 40 in the anticodon stem and loop of transfer RNAs. In Rhodopseudomonas palustris (strain BisB18), this protein is tRNA pseudouridine synthase A.